The following is a 145-amino-acid chain: Transthyretin (145 aa).

The N-terminal stretch at 1–20 (MASHRLFLLCLAGLVFMSEA) is a signal peptide. Residue cysteine 28 is modified to Sulfocysteine. Lysine 33 serves as a coordination point for L-thyroxine. Glutamate 60 bears the 4-carboxyglutamate mark. Serine 70 carries the post-translational modification Phosphoserine. L-thyroxine is bound at residue glutamate 72. N-linked (GlcNAc...) asparagine glycosylation occurs at asparagine 116. Serine 135 provides a ligand contact to L-thyroxine.

Belongs to the transthyretin family. Homotetramer. Dimer of dimers. In the homotetramer, subunits assemble around a central channel that can accommodate two ligand molecules. Interacts with RBP4. Post-translationally, sulfonation of the reactive cysteine Cys-28 enhances the stability of the native conformation of TTR, avoiding misassembly of the protein leading to amyloid formation.

Its subcellular location is the secreted. In terms of biological role, thyroid hormone-binding protein. Probably transports thyroxine from the bloodstream to the brain. The chain is Transthyretin (TTR) from Erinaceus europaeus (Western European hedgehog).